Reading from the N-terminus, the 370-residue chain is Dihydroorotate dehydrogenase (370 aa).

Substrate is bound by residues Lys-82, Asn-135–Met-139, and Asn-200. Position 82–83 (Lys-82–Thr-83) interacts with FMN. Asn-200 is an FMN binding site. Residue Cys-203 is the Nucleophile of the active site. Lys-241 and Ile-269 together coordinate FMN. Residue Asn-270–Thr-271 participates in substrate binding. Residues Gly-297, Gly-328–Gly-329, and Ala-350–Thr-351 contribute to the FMN site.

Belongs to the dihydroorotate dehydrogenase family. It depends on FMN as a cofactor.

The enzyme catalyses (S)-dihydroorotate + A = orotate + AH2. It functions in the pathway pyrimidine metabolism; UMP biosynthesis via de novo pathway. Catalyzes the conversion of dihydroorotate to orotate. Participates in the pyrimidine biosynthetic pathway. The sequence is that of Dihydroorotate dehydrogenase (pyr4) from Dictyostelium discoideum (Social amoeba).